Reading from the N-terminus, the 231-residue chain is MRVLVKLSGEALSGEGGRGFDPERVNYIVTEIKSVVEEGFKIGIVVGAGNLFRGVELKNLTMARADQIGLLGTVMNSVYLKDIFERSGLKARIYSQIVNLPDVERVNYDSIESALRENSILIFAGGTSNPFFTTDTAAVLRAQEMKAKLVVKATKVDGVYDKDPKKFPDAKKIPHLTFSEAMKMGLKVMDAEAFALCKKLGITVKVINFFEPGTLLKALKGEDVGSTVVPD.

6-9 (KLSG) is an ATP binding site. The tract at residues 14-19 (GEGGRG) is involved in allosteric activation by GTP. ATP contacts are provided by Gly49 and Arg53. UMP-binding positions include Asp66 and 127–134 (TSNPFFTT). Thr154, Tyr160, and Asp163 together coordinate ATP.

It belongs to the UMP kinase family. Homohexamer.

The protein localises to the cytoplasm. It carries out the reaction UMP + ATP = UDP + ADP. Its pathway is pyrimidine metabolism; CTP biosynthesis via de novo pathway; UDP from UMP (UMPK route): step 1/1. Allosterically activated by GTP. Inhibited by UTP. In terms of biological role, catalyzes the reversible phosphorylation of UMP to UDP. The sequence is that of Uridylate kinase from Thermotoga petrophila (strain ATCC BAA-488 / DSM 13995 / JCM 10881 / RKU-1).